A 348-amino-acid polypeptide reads, in one-letter code: D-alanine--D-alanine ligase (348 aa).

Residues 132 to 334 (KRVLESAGIP…YAELIEELVR (203 aa)) enclose the ATP-grasp domain. Position 162–217 (162–217 (EAALSYPVFVKPANMGSSVGISKAESEEELRAAILLALTYDSRILIEQGVLAREIE)) interacts with ATP. Mg(2+)-binding residues include aspartate 288, glutamate 301, and asparagine 303.

The protein belongs to the D-alanine--D-alanine ligase family. The cofactor is Mg(2+). It depends on Mn(2+) as a cofactor.

The protein localises to the cytoplasm. It catalyses the reaction 2 D-alanine + ATP = D-alanyl-D-alanine + ADP + phosphate + H(+). The protein operates within cell wall biogenesis; peptidoglycan biosynthesis. Functionally, cell wall formation. This is D-alanine--D-alanine ligase from Streptococcus equi subsp. zooepidemicus (strain H70).